The primary structure comprises 322 residues: Fructose-1,6-bisphosphatase class 1 3 (322 aa).

Mg(2+) is bound by residues Glu84, Asp103, Leu105, and Asp106. Residues 106–109 (DGSS), Asn198, and Lys262 contribute to the substrate site. Residue Glu268 coordinates Mg(2+).

The protein belongs to the FBPase class 1 family. As to quaternary structure, homotetramer. Mg(2+) is required as a cofactor.

It localises to the cytoplasm. It catalyses the reaction beta-D-fructose 1,6-bisphosphate + H2O = beta-D-fructose 6-phosphate + phosphate. It functions in the pathway carbohydrate biosynthesis; gluconeogenesis. The sequence is that of Fructose-1,6-bisphosphatase class 1 3 from Pseudoalteromonas translucida (strain TAC 125).